We begin with the raw amino-acid sequence, 206 residues long: MLSNLMSWQITLPIALAAAIIGYLFGSIPFGLILTRAAGLGDVRSIGSGNIGATNVLRTGNRTLAAATLLLDALKASAAAWVVSYFLGEEAAIIAGFFAFIGHLFPVWIGFKGGKGVATYIGTLLGVAPIMVVLFAAVWLAVAFTTRYSSLSALVAMLVIPVALWILGNEKVAAVMAIMTLISYWKHKANISRLMGGTESKIGAKG.

5 helical membrane passes run 14 to 34 (IALAAAIIGYLFGSIPFGLIL), 67 to 87 (ATLLLDALKASAAAWVVSYFL), 91 to 111 (AAIIAGFFAFIGHLFPVWIGF), 124 to 144 (LLGVAPIMVVLFAAVWLAVAF), and 148 to 168 (YSSLSALVAMLVIPVALWILG).

The protein belongs to the PlsY family. Probably interacts with PlsX.

The protein localises to the cell inner membrane. It carries out the reaction an acyl phosphate + sn-glycerol 3-phosphate = a 1-acyl-sn-glycero-3-phosphate + phosphate. The protein operates within lipid metabolism; phospholipid metabolism. Functionally, catalyzes the transfer of an acyl group from acyl-phosphate (acyl-PO(4)) to glycerol-3-phosphate (G3P) to form lysophosphatidic acid (LPA). This enzyme utilizes acyl-phosphate as fatty acyl donor, but not acyl-CoA or acyl-ACP. The sequence is that of Glycerol-3-phosphate acyltransferase 1 from Rhizobium johnstonii (strain DSM 114642 / LMG 32736 / 3841) (Rhizobium leguminosarum bv. viciae).